The primary structure comprises 249 residues: uncharacterized protein (249 aa).

The protein belongs to the ycf73 family.

It localises to the plastid. It is found in the chloroplast. This is an uncharacterized protein from Oryza sativa (Rice).